A 338-amino-acid polypeptide reads, in one-letter code: Lipoate-protein ligase A (338 aa).

Residues 29–216 (PATQRVLFLW…AFFAHYGERV (188 aa)) form the BPL/LPL catalytic domain. ATP-binding positions include Arg71, 76 to 79 (GAVF), and Lys134. Residue Lys134 coordinates (R)-lipoate.

It belongs to the LplA family. As to quaternary structure, monomer.

The protein localises to the cytoplasm. It carries out the reaction L-lysyl-[lipoyl-carrier protein] + (R)-lipoate + ATP = N(6)-[(R)-lipoyl]-L-lysyl-[lipoyl-carrier protein] + AMP + diphosphate + H(+). The protein operates within protein modification; protein lipoylation via exogenous pathway; protein N(6)-(lipoyl)lysine from lipoate: step 1/2. It participates in protein modification; protein lipoylation via exogenous pathway; protein N(6)-(lipoyl)lysine from lipoate: step 2/2. Functionally, catalyzes both the ATP-dependent activation of exogenously supplied lipoate to lipoyl-AMP and the transfer of the activated lipoyl onto the lipoyl domains of lipoate-dependent enzymes. The sequence is that of Lipoate-protein ligase A from Shigella sonnei (strain Ss046).